A 124-amino-acid chain; its full sequence is uncharacterized protein (124 aa).

The helical transmembrane segment at 2–22 threads the bilayer; that stretch reads AIIIAIIAAVIVIAALITFNV. Residues 24-124 are disordered; the sequence is NASPGPEKQE…ALLSMKNKKK (101 aa). Composition is skewed to basic and acidic residues over residues 30-58, 67-81, and 89-113; these read EKQE…RAAE, DSPK…DDIY, and KHSD…RSYR.

It localises to the membrane. This is an uncharacterized protein from Bacillus subtilis (strain 168).